The chain runs to 256 residues: Dihydroorotate dehydrogenase B (NAD(+)), electron transfer subunit (256 aa).

Positions Met-1–Val-101 constitute an FAD-binding FR-type domain. FAD is bound by residues Arg-52 to Ser-55, Ile-69 to Arg-71, and Gly-76 to Thr-77. [2Fe-2S] cluster contacts are provided by Cys-220, Cys-225, Cys-228, and Cys-243.

Belongs to the PyrK family. Heterotetramer of 2 PyrK and 2 PyrD type B subunits. The cofactor is [2Fe-2S] cluster. FAD is required as a cofactor.

Its pathway is pyrimidine metabolism; UMP biosynthesis via de novo pathway; orotate from (S)-dihydroorotate (NAD(+) route): step 1/1. Functionally, responsible for channeling the electrons from the oxidation of dihydroorotate from the FMN redox center in the PyrD type B subunit to the ultimate electron acceptor NAD(+). The sequence is that of Dihydroorotate dehydrogenase B (NAD(+)), electron transfer subunit from Bacillus velezensis (strain DSM 23117 / BGSC 10A6 / LMG 26770 / FZB42) (Bacillus amyloliquefaciens subsp. plantarum).